A 182-amino-acid chain; its full sequence is UPF0398 protein lwe1908 (182 aa).

Belongs to the UPF0398 family.

The sequence is that of UPF0398 protein lwe1908 from Listeria welshimeri serovar 6b (strain ATCC 35897 / DSM 20650 / CCUG 15529 / CIP 8149 / NCTC 11857 / SLCC 5334 / V8).